Consider the following 157-residue polypeptide: Small ribosomal subunit protein uS7 (157 aa).

It belongs to the universal ribosomal protein uS7 family. As to quaternary structure, part of the 30S ribosomal subunit. Contacts proteins S9 and S11.

Its function is as follows. One of the primary rRNA binding proteins, it binds directly to 16S rRNA where it nucleates assembly of the head domain of the 30S subunit. Is located at the subunit interface close to the decoding center, probably blocks exit of the E-site tRNA. This chain is Small ribosomal subunit protein uS7, found in Caulobacter sp. (strain K31).